A 1412-amino-acid chain; its full sequence is DNA-directed RNA polymerase subunit beta' (1412 aa).

Residues C70, C72, C85, and C88 each coordinate Zn(2+). Positions 460, 462, and 464 each coordinate Mg(2+). Residues C819, C893, C900, and C903 each coordinate Zn(2+). A disordered region spans residues E1393–E1412.

The protein belongs to the RNA polymerase beta' chain family. The RNAP catalytic core consists of 2 alpha, 1 beta, 1 beta' and 1 omega subunit. When a sigma factor is associated with the core the holoenzyme is formed, which can initiate transcription. It depends on Mg(2+) as a cofactor. Zn(2+) serves as cofactor.

The enzyme catalyses RNA(n) + a ribonucleoside 5'-triphosphate = RNA(n+1) + diphosphate. In terms of biological role, DNA-dependent RNA polymerase catalyzes the transcription of DNA into RNA using the four ribonucleoside triphosphates as substrates. This is DNA-directed RNA polymerase subunit beta' from Burkholderia pseudomallei (strain 1106a).